The primary structure comprises 161 residues: Cell cycle link protein (161 aa).

The interval 9–21 (MPDDVKREIKEIY) is binding to host SKP1 protein. An LXCXE motif, interaction with host RBR motif is present at residues 111-115 (LYCDE).

Interacts with host SKP1. Interacts (via LXCXE domain) with host retinoblastoma-related protein 2 (RBR2). Interacts (via LXCXE domain) with human RB1. Interacts (via LXCXE domain) with retinoblastoma-related proteins (RBR).

Interacts with and disrupts the function of host retinoblastoma-related proteins RBR, which are key regulators of the cell cycle. Induces transcriptional activation of E2F-regulated S-phase and G2/M-phase-specific genes. Inactivation of the ability of RBR to arrest the cell cycle leads to the stimulation of viral DNA replication. Acts as a suppressor of RNA-mediated gene silencing, also known as post-transcriptional gene silencing (PTGS), a mechanism of plant viral defense that limits the accumulation of viral RNAs. This is Cell cycle link protein (DNA-C) from Musa (BBTV).